The sequence spans 258 residues: UPF0246 protein MS0374 (258 aa).

Belongs to the UPF0246 family.

This chain is UPF0246 protein MS0374, found in Mannheimia succiniciproducens (strain KCTC 0769BP / MBEL55E).